We begin with the raw amino-acid sequence, 216 residues long: Imidazole glycerol phosphate synthase subunit HisH (216 aa).

One can recognise a Glutamine amidotransferase type-1 domain in the interval 2-216 (RVAIIDYGSG…LIANFLKWKP (215 aa)). Catalysis depends on cysteine 88, which acts as the Nucleophile. Catalysis depends on residues histidine 196 and glutamate 198.

Heterodimer of HisH and HisF.

It localises to the cytoplasm. The catalysed reaction is 5-[(5-phospho-1-deoxy-D-ribulos-1-ylimino)methylamino]-1-(5-phospho-beta-D-ribosyl)imidazole-4-carboxamide + L-glutamine = D-erythro-1-(imidazol-4-yl)glycerol 3-phosphate + 5-amino-1-(5-phospho-beta-D-ribosyl)imidazole-4-carboxamide + L-glutamate + H(+). The enzyme catalyses L-glutamine + H2O = L-glutamate + NH4(+). Its pathway is amino-acid biosynthesis; L-histidine biosynthesis; L-histidine from 5-phospho-alpha-D-ribose 1-diphosphate: step 5/9. Functionally, IGPS catalyzes the conversion of PRFAR and glutamine to IGP, AICAR and glutamate. The HisH subunit catalyzes the hydrolysis of glutamine to glutamate and ammonia as part of the synthesis of IGP and AICAR. The resulting ammonia molecule is channeled to the active site of HisF. In Brucella suis biovar 1 (strain 1330), this protein is Imidazole glycerol phosphate synthase subunit HisH.